A 281-amino-acid polypeptide reads, in one-letter code: Ethylene-inducing xylanase 1 (281 aa).

The N-terminal stretch at 1–19 (MVSYKAFLITLAAVTRVLT) is a signal peptide. Asparagine 23 carries N-linked (GlcNAc...) asparagine glycosylation. Residues 32–220 (SGTPSSTGTS…SSGSSDITVG (189 aa)) enclose the GH11 domain. Glutamate 116 acts as the Nucleophile in catalysis. Glutamate 207 (proton donor) is an active-site residue. One can recognise a CBM1 domain in the interval 246-281 (TCGALYSQCGGTGFTGSQCCASGTCKYANSYYSQCL).

The protein belongs to the glycosyl hydrolase 11 (cellulase G) family.

The catalysed reaction is Endohydrolysis of (1-&gt;4)-beta-D-xylosidic linkages in xylans.. It functions in the pathway glycan degradation; xylan degradation. Functionally, endo-1,4-beta-xylanase involved in the hydrolysis of xylan, a major structural heterogeneous polysaccharide found in plant biomass representing the second most abundant polysaccharide in the biosphere, after cellulose. May act as an elicitor of plant defense responses in certain plants but does not exhibit any cell death when transiently expressed in N.benthamiana. This is Ethylene-inducing xylanase 1 from Botryotinia fuckeliana (strain B05.10) (Noble rot fungus).